We begin with the raw amino-acid sequence, 244 residues long: Transcription factor Sox-12 (244 aa).

Positions 1-22 (MVQNKTTGSCPKPTEVAPGGPS) are disordered. Positions 31–99 (IKRPMNAFMV…KHMADYPNYK (69 aa)) form a DNA-binding region, HMG box. Disordered regions lie at residues 101 to 137 (RPRR…QMDT) and 152 to 193 (GDQV…HEGL). 2 stretches are compositionally biased toward polar residues: residues 120–137 (STAT…QMDT) and 176–186 (HTKTVPSSPQS).

As to expression, expressed at a low level in embryos, and in the adult lung, ovary, skeletal muscle, testis, brain and heart.

It is found in the nucleus. In terms of biological role, transcription factor that binds to the sequence 5'-AACAAT-3'. Acts as a transcriptional activator. This is Transcription factor Sox-12 (sox12) from Xenopus laevis (African clawed frog).